Reading from the N-terminus, the 1091-residue chain is Voltage-dependent calcium channel subunit alpha-2/delta-3 (1091 aa).

Positions 1–28 are cleaved as a signal peptide; the sequence is MAGPGSPRRASRGASALLAAALLYAALG. At 29–1068 the chain is on the extracellular side; sequence DVVRSEQQIP…HPEENARECG (1040 aa). An N-linked (GlcNAc...) asparagine glycan is attached at Asn166. One can recognise a VWFA domain in the interval 256–438; it reads DVVILVDVSG…ENVMEYLHVL (183 aa). A divalent metal cation-binding residues include Asp262, Ser264, and Ser266. Residues 262–266 carry the MIDAS-like motif motif; it reads DVSGS. Residue Asn309 is glycosylated (N-linked (GlcNAc...) asparagine). A disulfide bridge connects residues Cys412 and Cys1055. The region spanning 452-549 is the Cache domain; sequence WTEAYIDSTL…RLLYEEGKKR (98 aa). N-linked (GlcNAc...) asparagine glycans are attached at residues Asn553, Asn632, and Asn793. A Phosphotyrosine modification is found at Tyr924. The helical transmembrane segment at 1069 to 1089 threads the bilayer; that stretch reads GAPSLQAQTVLLLLPLLLMLF. Over 1090-1091 the chain is Cytoplasmic; it reads SR.

The protein belongs to the calcium channel subunit alpha-2/delta family. In terms of assembly, dimer formed of alpha-2-2 and delta-2 chains; disulfide-linked. Voltage-dependent calcium channels are multisubunit complexes, consisting of alpha-1 (CACNA1), alpha-2 (CACNA2D), beta (CACNB) and delta (CACNA2D) subunits in a 1:1:1:1 ratio. N-glycosylated. Post-translationally, may be proteolytically processed into subunits alpha-2-3 and delta-3 that are disulfide-linked. It is however unclear whether such cleavage really takes place in vivo and has a functional role. In terms of tissue distribution, only detected in brain. Not present in lung, testis, aorta, spleen, jejunum, ventricular muscle and kidney (at protein level). According to PubMed:11687876, it is brain-specific, while according to PubMed:11245980, it is widely expressed.

It localises to the membrane. Its function is as follows. The alpha-2/delta subunit of voltage-dependent calcium channels regulates calcium current density and activation/inactivation kinetics of the calcium channel. Acts as a regulatory subunit for P/Q-type calcium channel (CACNA1A), N-type (CACNA1B), L-type (CACNA1C OR CACNA1D) but not T-type (CACNA1G). This chain is Voltage-dependent calcium channel subunit alpha-2/delta-3 (CACNA2D3), found in Homo sapiens (Human).